A 231-amino-acid polypeptide reads, in one-letter code: uncharacterized protein (231 aa).

This is an uncharacterized protein from Escherichia coli (strain K12).